Here is a 179-residue protein sequence, read N- to C-terminus: Coiled-coil domain-containing protein 32 (179 aa).

The segment at 36 to 65 (DNAFSDSFMDSHPAGESHTAAADSAVQPAG) is disordered. The stretch at 75 to 98 (EVYLASLEKKLRRIKGLNEEVTSK) forms a coiled coil. Positions 158 to 179 (LIPPESQAEKPEAGDKPAAAEQ) are disordered.

In terms of assembly, interacts with AP2S1; the interaction is direct and mediates association with adaptor protein complex 2 (AP-2).

It is found in the membrane. The protein localises to the coated pit. Functionally, regulates clathrin-mediated endocytsois of cargos such as transferrin probably through the association and modulation of adaptor protein complex 2 (AP-2). Has a role in ciliogenesis. Required for proper cephalic and left/right axis development. The polypeptide is Coiled-coil domain-containing protein 32 (Ccdc32) (Mus musculus (Mouse)).